Here is a 96-residue protein sequence, read N- to C-terminus: Putative pterin-4-alpha-carbinolamine dehydratase (96 aa).

It belongs to the pterin-4-alpha-carbinolamine dehydratase family.

The enzyme catalyses (4aS,6R)-4a-hydroxy-L-erythro-5,6,7,8-tetrahydrobiopterin = (6R)-L-erythro-6,7-dihydrobiopterin + H2O. In Prochlorococcus marinus (strain MIT 9313), this protein is Putative pterin-4-alpha-carbinolamine dehydratase.